Reading from the N-terminus, the 129-residue chain is Small ribosomal subunit protein uS8 (129 aa).

This sequence belongs to the universal ribosomal protein uS8 family. As to quaternary structure, part of the 30S ribosomal subunit.

Its function is as follows. One of the primary rRNA binding proteins, it binds directly to 16S rRNA central domain where it helps coordinate assembly of the platform of the 30S subunit. The sequence is that of Small ribosomal subunit protein uS8 from Thermoplasma acidophilum (strain ATCC 25905 / DSM 1728 / JCM 9062 / NBRC 15155 / AMRC-C165).